The primary structure comprises 1236 residues: DNA topoisomerase 2 (1236 aa).

ATP is bound by residues asparagine 65, asparagine 96, serine 124–asparagine 126, glycine 137–lysine 144, and glutamine 354–lysine 356. A Toprim domain is found at arginine 434–isoleucine 548. Mg(2+)-binding residues include glutamate 440, aspartate 517, and aspartate 519. The Topo IIA-type catalytic domain occupies isoleucine 685 to leucine 1101. The active-site O-(5'-phospho-DNA)-tyrosine intermediate is tyrosine 775. Positions alanine 956–glycine 965 are interaction with DNA. A disordered region spans residues tyrosine 1161–valine 1211.

It belongs to the type II topoisomerase family. In terms of assembly, homodimer. It depends on Mg(2+) as a cofactor. Requires Mn(2+) as cofactor. Ca(2+) serves as cofactor.

Its subcellular location is the nucleus. It carries out the reaction ATP-dependent breakage, passage and rejoining of double-stranded DNA.. Control of topological states of DNA by transient breakage and subsequent rejoining of DNA strands. Topoisomerase II makes double-strand breaks. The protein is DNA topoisomerase 2 (TOP2) of Leishmania chagasi.